Reading from the N-terminus, the 890-residue chain is DNA mismatch repair protein MutS (890 aa).

ATP is bound at residue 607–614 (GPNMSGKS). The tract at residues 832–851 (ESQLSFFGTEQSSKKQDKPV) is disordered.

It belongs to the DNA mismatch repair MutS family.

This protein is involved in the repair of mismatches in DNA. It is possible that it carries out the mismatch recognition step. This protein has a weak ATPase activity. The polypeptide is DNA mismatch repair protein MutS (Bacillus cereus (strain 03BB102)).